We begin with the raw amino-acid sequence, 709 residues long: G1/S-specific cyclin-E (709 aa).

Disordered regions lie at residues 1-30, 43-149, 162-205, 221-289, and 642-709; these read MGLNAKSVCSTSSTEPNGSIVTTAPSNGEV, ISSS…NLSS, VDGQ…GSKQ, TVVT…PKHQ, and ALRA…RSNP. Composition is skewed to polar residues over residues 7–29, 61–70, and 91–106; these read SVCSTSSTEPNGSIVTTAPSNGE, PSTSFSSASQ, and CDSQNLAASTAATSNG. 4 positions are modified to phosphoserine: Ser114, Ser115, Ser117, and Ser129. Over residues 162-175 the composition is skewed to polar residues; sequence VDGQSTQELLSIRS. Phosphoserine occurs at positions 187, 192, 195, and 198. Residues 187–199 are compositionally biased toward pro residues; the sequence is SPLPDSPDSPPSP. Over residues 228–258 the composition is skewed to acidic residues; sequence EDDDLLDDSCEDYSYDEDDEDDVEEEDDDVE. Residues 260–277 show a composition bias toward polar residues; it reads YSSTISPASSGCSQQQAV. Phosphothreonine is present on Thr651. Residues 677 to 709 show a composition bias toward low complexity; sequence SSTTTCCNTAASNKGGKSSSNNSVTSCSSRSNP.

Belongs to the cyclin family. Cyclin E subfamily. Interacts with a member of the CDK2/CDK protein kinases to form a serine/threonine kinase holoenzyme complex. The cyclin subunit imparts substrate specificity to the complex. Interacts (via C-terminus) with Z600 (via C-terminus). Isoform II is ubiquitous in early embryos and, prior to mitosis 14, is rapidly degraded in all cells except the pole (germ) cells. Expressed during G1 phase in proliferating peripheral nervous system cells. Constitutive expression in embryonic cycles lacking a G1 phase.

It is found in the nucleus. Functionally, essential for the control of the cell cycle at the G1/S (start) transition. Targeted by archipelago for degradation by the SFC ubiquitin ligase complex. The sequence is that of G1/S-specific cyclin-E (CycE) from Drosophila melanogaster (Fruit fly).